Reading from the N-terminus, the 447-residue chain is Large ribosomal subunit protein bL27m (447 aa).

Composition is skewed to basic and acidic residues over residues 377-402 (QREAKKAREGGAAAEKSEKKEVKAEK) and 409-447 (KVEKPKAPEAAKKESKPKVEEKKAAAAEPKKDSKTEKKD). The disordered stretch occupies residues 377–447 (QREAKKAREG…KKDSKTEKKD (71 aa)).

It belongs to the bacterial ribosomal protein bL27 family. As to quaternary structure, component of the mitochondrial large ribosomal subunit (mt-LSU). Mature N.crassa 74S mitochondrial ribosomes consist of a small (37S) and a large (54S) subunit. The 37S small subunit contains a 16S ribosomal RNA (16S mt-rRNA) and 32 different proteins. The 54S large subunit contains a 23S rRNA (23S mt-rRNA) and 42 different proteins.

Its subcellular location is the mitochondrion. Component of the mitochondrial ribosome (mitoribosome), a dedicated translation machinery responsible for the synthesis of mitochondrial genome-encoded proteins, including at least some of the essential transmembrane subunits of the mitochondrial respiratory chain. The mitoribosomes are attached to the mitochondrial inner membrane and translation products are cotranslationally integrated into the membrane. The protein is Large ribosomal subunit protein bL27m (mrp7) of Neurospora crassa (strain ATCC 24698 / 74-OR23-1A / CBS 708.71 / DSM 1257 / FGSC 987).